A 311-amino-acid polypeptide reads, in one-letter code: tRNA dimethylallyltransferase (311 aa).

10–17 lines the ATP pocket; it reads GPTASGKT. Substrate is bound at residue 12 to 17; it reads TASGKT. 3 interaction with substrate tRNA regions span residues 35 to 38, 159 to 163, and 240 to 245; these read DSAL, QRINR, and RCVGYR.

Belongs to the IPP transferase family. Monomer. Mg(2+) serves as cofactor.

It catalyses the reaction adenosine(37) in tRNA + dimethylallyl diphosphate = N(6)-dimethylallyladenosine(37) in tRNA + diphosphate. Its function is as follows. Catalyzes the transfer of a dimethylallyl group onto the adenine at position 37 in tRNAs that read codons beginning with uridine, leading to the formation of N6-(dimethylallyl)adenosine (i(6)A). This is tRNA dimethylallyltransferase from Haemophilus influenzae (strain PittEE).